A 327-amino-acid chain; its full sequence is Undecaprenyl-phosphate 4-deoxy-4-formamido-L-arabinose transferase (327 aa).

The next 2 helical transmembrane spans lie at 236 to 256 (LSIFGSVIALLGFAFGLLLVV) and 270 to 290 (VFMLFAVLFMFIGAQFIGMGL).

This sequence belongs to the glycosyltransferase 2 family.

It localises to the cell inner membrane. The enzyme catalyses UDP-4-deoxy-4-formamido-beta-L-arabinose + di-trans,octa-cis-undecaprenyl phosphate = 4-deoxy-4-formamido-alpha-L-arabinopyranosyl di-trans,octa-cis-undecaprenyl phosphate + UDP. It participates in glycolipid biosynthesis; 4-amino-4-deoxy-alpha-L-arabinose undecaprenyl phosphate biosynthesis; 4-amino-4-deoxy-alpha-L-arabinose undecaprenyl phosphate from UDP-4-deoxy-4-formamido-beta-L-arabinose and undecaprenyl phosphate: step 1/2. Its pathway is bacterial outer membrane biogenesis; lipopolysaccharide biosynthesis. Functionally, catalyzes the transfer of 4-deoxy-4-formamido-L-arabinose from UDP to undecaprenyl phosphate. The modified arabinose is attached to lipid A and is required for resistance to polymyxin and cationic antimicrobial peptides. The chain is Undecaprenyl-phosphate 4-deoxy-4-formamido-L-arabinose transferase from Klebsiella pneumoniae (strain 342).